The chain runs to 260 residues: Snake venom serine protease pallabin (260 aa).

An N-terminal signal peptide occupies residues 1-18 (MVLIRVLANLLILQLSYA). A propeptide spanning residues 19 to 24 (QKSSKL) is cleaved from the precursor. In terms of domain architecture, Peptidase S1 spans 25–251 (VIGGDECNIN…HLDWIENIIA (227 aa)). Disulfide bonds link C31–C163, C50–C66, C98–C258, C142–C212, C174–C191, and C202–C227. Catalysis depends on H65, which acts as the Charge relay system. The N-linked (GlcNAc...) asparagine glycan is linked to N103. Catalysis depends on D110, which acts as the Charge relay system. S206 acts as the Charge relay system in catalysis.

Belongs to the peptidase S1 family. Snake venom subfamily. In terms of assembly, monomer. Expressed by the venom gland.

It localises to the secreted. Functionally, snake venom serine protease that may act in the hemostasis system of the prey. The sequence is that of Snake venom serine protease pallabin (JZTHR5) from Gloydius halys (Chinese water mocassin).